A 561-amino-acid chain; its full sequence is MNINISDLLNGNYILLLFVVLALGLCLGKLRLGSVQLGNSIGVLVVSLLLGQQHFSINTDALNLGFMLFIFCVGVEAGPNFFSIFFRDGKNYLMLALVMVGSALLIALGLGKLFGWDIGLTAGMLAGSMTSTPVLVGAGDTLRHSGIASPQLSSALDNLSLGYALTYLIGLVSLIVGARYLPKLQHQDLQTSAQQIARERGLDTDANRKVYLPVIRAYRVGPELVAWTDGKNLRELGIYRQTGCYIERIRRNGILANPDGDAVLQMGDEIALVGYPDAHARLDPSFRNGKEVFDRDLLDMRIVTEEIVVKNHNAVGRRLAQLKLTDHGCFLNRVIRSQIEMPIDDNVVLNKGDVLQVSGDARRVKTIADRIGFISIHSQVTDLLAFCAFFIIGLMIGMITFQFSNFSFGIGNAAGLLFAGIMLGFLRANHPTFGYIPQGALNMVKEFGLMVFMAGVGLSAGSGINNGLGAVGGQMLIAGLVVSLVPVVICFLFGAYVLRMNRALLFGAMMGARTCAPAMEIISDTARSNIPALGYAGTYAIANVLLTLAGTLIVIIWPELG.

A run of 5 helical transmembrane segments spans residues 8 to 28 (LLNG…LCLG), 32 to 52 (LGSV…LLGQ), 66 to 86 (FMLF…SIFF), 94 to 114 (MLAL…GKLF), and 158 to 178 (NLSL…IVGA). RCK C-terminal domains follow at residues 200-288 (RGLD…SFRN) and 292-373 (VFDR…RIGF). Helical transmembrane passes span 383-403 (LLAF…TFQF), 406-426 (FSFG…LGFL), 447-467 (FGLM…INNG), 475-495 (MLIA…LFGA), and 537-557 (GTYA…VIIW).

It belongs to the AAE transporter (TC 2.A.81) family. YbjL subfamily.

The protein resides in the cell membrane. This chain is Putative transport protein YbjL, found in Salmonella choleraesuis (strain SC-B67).